Here is a 250-residue protein sequence, read N- to C-terminus: Aquaporin TIP2-1 (250 aa).

Methionine 1 carries the post-translational modification N-acetylmethionine. Residues 1–20 are Cytoplasmic-facing; the sequence is MAGVAFGSFDDSFSLASLRA. Alanine 2 is subject to N-acetylalanine; in Aquaporin TIP2-1, N-terminally processed. A helical transmembrane segment spans residues 21 to 41; that stretch reads YLAEFISTLLFVFAGVGSAIA. Topologically, residues 42-54 are vacuolar; that stretch reads YAKLTSDAALDTP. The helical transmembrane segment at 55–75 threads the bilayer; the sequence is GLVAIAVCHGFALFVAVAIGA. Residues 76–98 lie on the Cytoplasmic side of the membrane; sequence NISGGHVNPAVTFGLAVGGQITV. An NPA 1 motif is present at residues 83–85; sequence NPA. The chain crosses the membrane as a helical span at residues 99–119; the sequence is ITGVFYWIAQLLGSTAACFLL. At 120-141 the chain is on the vacuolar side; the sequence is KYVTGGLAVPTHSVAAGLGSIE. The helical transmembrane segment at 142 to 162 threads the bilayer; the sequence is GVVMEIIITFALVYTVYATAA. Residues 163–168 lie on the Cytoplasmic side of the membrane; the sequence is DPKKGS. Residues 169 to 189 form a helical membrane-spanning segment; it reads LGTIAPLAIGLIVGANILAAG. Residues 190-215 lie on the Vacuolar side of the membrane; it reads PFSGGSMNPARSFGPAVAAGDFSGHW. Positions 197 to 199 match the NPA 2 motif; the sequence is NPA. Residues 216 to 236 form a helical membrane-spanning segment; sequence VYWVGPLIGGGLAGLIYGNVF. Residues 237–250 are Cytoplasmic-facing; it reads MGSSEHVPLASADF.

Belongs to the MIP/aquaporin (TC 1.A.8) family. TIP (TC 1.A.8.10) subfamily. As to quaternary structure, interacts with cucumber mosaic virus (CMV) Protein 1a. In terms of tissue distribution, strongly expressed in shoot, rosette, bolt and flowers. Also expressed in roots, flower buds and above ground.

It localises to the vacuole membrane. In terms of biological role, aquaporin required to facilitate the transport of water from the vacuolar compartment to the cytoplasm. Does not promote glycerol permeability. Its function is impaired by Hg(2+). Transports urea in yeast cells and Xenopus laevis oocytes in a pH-independent manner. Transports methylammonium or ammonium in yeast cells and Xenopus laevis oocytes, preferentially at high medium pH. May participate in vacuolar compartmentation and detoxification of ammonium. The polypeptide is Aquaporin TIP2-1 (TIP2-1) (Arabidopsis thaliana (Mouse-ear cress)).